The following is a 358-amino-acid chain: DNA-directed RNA polymerase subunit alpha (358 aa).

Residues 1-231 (MIQNVTDDKI…NIFLSLSNSS (231 aa)) form an alpha N-terminal domain (alpha-NTD) region. An alpha C-terminal domain (alpha-CTD) region spans residues 266–358 (QESLGWKKIS…LELINNKDIS (93 aa)).

It belongs to the RNA polymerase alpha chain family. In plastids the minimal PEP RNA polymerase catalytic core is composed of four subunits: alpha, beta, beta', and beta''. When a (nuclear-encoded) sigma factor is associated with the core the holoenzyme is formed, which can initiate transcription.

The protein resides in the plastid. Its subcellular location is the chloroplast. The catalysed reaction is RNA(n) + a ribonucleoside 5'-triphosphate = RNA(n+1) + diphosphate. Functionally, DNA-dependent RNA polymerase catalyzes the transcription of DNA into RNA using the four ribonucleoside triphosphates as substrates. The protein is DNA-directed RNA polymerase subunit alpha of Chara vulgaris (Common stonewort).